The primary structure comprises 237 residues: NAD-dependent protein deacetylase (237 aa).

The Deacetylase sirtuin-type domain maps to 1–237 (MFTTSLRQAQ…LVETNRALQK (237 aa)). Residues Ala18, Thr22, Phe29, Arg30, Gln95, Asp98, and His113 each coordinate NAD(+). Residue Phe29 coordinates nicotinamide. Position 98 (Asp98) interacts with nicotinamide. His113 acts as the Proton acceptor in catalysis. Zn(2+) contacts are provided by Cys121, Cys124, Cys140, and Cys142. Positions 180, 181, 205, and 224 each coordinate NAD(+).

This sequence belongs to the sirtuin family. Class U subfamily. The cofactor is Zn(2+).

It localises to the cytoplasm. The enzyme catalyses N(6)-acetyl-L-lysyl-[protein] + NAD(+) + H2O = 2''-O-acetyl-ADP-D-ribose + nicotinamide + L-lysyl-[protein]. NAD-dependent protein deacetylase which modulates the activities of several enzymes which are inactive in their acetylated form. The polypeptide is NAD-dependent protein deacetylase (Shouchella clausii (strain KSM-K16) (Alkalihalobacillus clausii)).